A 109-amino-acid polypeptide reads, in one-letter code: Ribonuclease P protein component (109 aa).

It belongs to the RnpA family. Consists of a catalytic RNA component (M1 or rnpB) and a protein subunit.

It catalyses the reaction Endonucleolytic cleavage of RNA, removing 5'-extranucleotides from tRNA precursor.. RNaseP catalyzes the removal of the 5'-leader sequence from pre-tRNA to produce the mature 5'-terminus. It can also cleave other RNA substrates such as 4.5S RNA. The protein component plays an auxiliary but essential role in vivo by binding to the 5'-leader sequence and broadening the substrate specificity of the ribozyme. The sequence is that of Ribonuclease P protein component from Streptococcus agalactiae serotype Ia (strain ATCC 27591 / A909 / CDC SS700).